The chain runs to 228 residues: Large ribosomal subunit protein uL4 (228 aa).

2 disordered regions span residues 45-102 (GRQG…SQRT) and 208-228 (PAKG…EANQ). Low complexity predominate over residues 208-221 (PAKGKTAKAAATSG).

It belongs to the universal ribosomal protein uL4 family. Part of the 50S ribosomal subunit.

One of the primary rRNA binding proteins, this protein initially binds near the 5'-end of the 23S rRNA. It is important during the early stages of 50S assembly. It makes multiple contacts with different domains of the 23S rRNA in the assembled 50S subunit and ribosome. Functionally, forms part of the polypeptide exit tunnel. This Saccharopolyspora erythraea (strain ATCC 11635 / DSM 40517 / JCM 4748 / NBRC 13426 / NCIMB 8594 / NRRL 2338) protein is Large ribosomal subunit protein uL4.